The following is a 250-amino-acid chain: Glycerol-1-phosphate phosphohydrolase 2 (250 aa).

The active-site Nucleophile is the Asp18. Mg(2+) is bound by residues Asp18 and Asp20. Catalysis depends on Asp20, which acts as the Proton donor. Residue Lys64 forms a Glycyl lysine isopeptide (Lys-Gly) (interchain with G-Cter in ubiquitin) linkage. Ser90 is subject to Phosphoserine. Lys144 is covalently cross-linked (Glycyl lysine isopeptide (Lys-Gly) (interchain with G-Cter in ubiquitin)). Asp179 provides a ligand contact to Mg(2+).

The protein belongs to the HAD-like hydrolase superfamily. DOG/GPP family. As to quaternary structure, monomer. Requires Mg(2+) as cofactor.

It localises to the cytoplasm. The protein resides in the nucleus. It carries out the reaction sn-glycerol 1-phosphate + H2O = glycerol + phosphate. The enzyme catalyses sn-glycerol 3-phosphate + H2O = glycerol + phosphate. In terms of biological role, glycerol-1-phosphate phosphohydrolase involved in glycerol biosynthesis. Plays a role in osmoadaptation. In Saccharomyces cerevisiae (strain ATCC 204508 / S288c) (Baker's yeast), this protein is Glycerol-1-phosphate phosphohydrolase 2.